The sequence spans 164 residues: MTQWIIWLAIETEAAKPEGGLFDFDATLPVMMVQLLVLMLILNAVFYKPLIKILDERKEYIQSNFNEAEKCLAQAAELTTQYETKITDARQNASKLTNTTRSEIQRFVSEKLEEAQKKADSELASATNKLELQKDEALKSLESEVQTLSTKILEKLLGIQIANT.

Residues 26–46 (ATLPVMMVQLLVLMLILNAVF) traverse the membrane as a helical segment.

This sequence belongs to the ATPase B chain family. As to quaternary structure, F-type ATPases have 2 components, F(1) - the catalytic core - and F(0) - the membrane proton channel. F(1) has five subunits: alpha(3), beta(3), gamma(1), delta(1), epsilon(1). F(0) has four main subunits: a(1), b(1), b'(1) and c(10-14). The alpha and beta chains form an alternating ring which encloses part of the gamma chain. F(1) is attached to F(0) by a central stalk formed by the gamma and epsilon chains, while a peripheral stalk is formed by the delta, b and b' chains.

The protein localises to the plastid. It localises to the cyanelle thylakoid membrane. Functionally, f(1)F(0) ATP synthase produces ATP from ADP in the presence of a proton or sodium gradient. F-type ATPases consist of two structural domains, F(1) containing the extramembraneous catalytic core and F(0) containing the membrane proton channel, linked together by a central stalk and a peripheral stalk. During catalysis, ATP synthesis in the catalytic domain of F(1) is coupled via a rotary mechanism of the central stalk subunits to proton translocation. Its function is as follows. Component of the F(0) channel, it forms part of the peripheral stalk, linking F(1) to F(0). The b'-subunit is a diverged and duplicated form of b found in plants and photosynthetic bacteria. The sequence is that of ATP synthase B' chain, cyanelle from Cyanophora paradoxa.